A 296-amino-acid chain; its full sequence is D-alanine--D-alanine ligase (296 aa).

An ATP-grasp domain is found at 103 to 293 (KEILMHYRMP…FDSFVKRIIE (191 aa)). 129-180 (ISFPVAVKPSSGGSSIATFKVKSIQELKHAYEEASKYGEVMIEQWVTGKEIT) provides a ligand contact to ATP. Mg(2+) is bound by residues aspartate 247, glutamate 260, and asparagine 262.

This sequence belongs to the D-alanine--D-alanine ligase family. Mg(2+) serves as cofactor. The cofactor is Mn(2+).

The protein resides in the cytoplasm. It catalyses the reaction 2 D-alanine + ATP = D-alanyl-D-alanine + ADP + phosphate + H(+). It functions in the pathway cell wall biogenesis; peptidoglycan biosynthesis. In terms of biological role, cell wall formation. The chain is D-alanine--D-alanine ligase from Francisella tularensis subsp. tularensis (strain WY96-3418).